The sequence spans 359 residues: PWWP domain-containing protein 1 (359 aa).

Positions 1-37 (MNNARTNAKRRRLSSKQGGLSISEGKESNIPSVVEES) are disordered. The region spanning 52–114 (FGDRILVKAP…RNSVKPLLDS (63 aa)) is the PWWP domain. Disordered regions lie at residues 133–161 (AYEA…AAEE) and 204–255 (VAST…SPLN). The segment covering 204-224 (VASTSRSSTQLSDQRYPLSSN) has biased composition (polar residues). At S252 the chain carries Phosphoserine.

As to quaternary structure, interacts with set9 and histone H4K20me1. Associates with nucleosomes.

The protein resides in the nucleus. Functionally, necessary for DNA damage checkpoint activation. Required for the association of set9 with chromatin and subsequent methylation of H4K20. Associates with H4K20me1 to increase the concentration of set9 on chromatin to perform H4K20me3. H4K20me3 is mainly enriched at heterochromatin and is required for proper heterochromatin assembly. This chain is PWWP domain-containing protein 1 (pdp1), found in Schizosaccharomyces pombe (strain 972 / ATCC 24843) (Fission yeast).